A 200-amino-acid polypeptide reads, in one-letter code: Glycerol-3-phosphate acyltransferase (200 aa).

Helical transmembrane passes span 3 to 23, 50 to 70, 75 to 95, 109 to 129, and 134 to 154; these read YIYS…FFIA, FYGA…VFLV, IKFM…SIFL, VFLA…LFIV, and YVSL…FFAG.

This sequence belongs to the PlsY family. Probably interacts with PlsX.

Its subcellular location is the cell inner membrane. The catalysed reaction is an acyl phosphate + sn-glycerol 3-phosphate = a 1-acyl-sn-glycero-3-phosphate + phosphate. It functions in the pathway lipid metabolism; phospholipid metabolism. Catalyzes the transfer of an acyl group from acyl-phosphate (acyl-PO(4)) to glycerol-3-phosphate (G3P) to form lysophosphatidic acid (LPA). This enzyme utilizes acyl-phosphate as fatty acyl donor, but not acyl-CoA or acyl-ACP. The protein is Glycerol-3-phosphate acyltransferase of Thermosipho melanesiensis (strain DSM 12029 / CIP 104789 / BI429).